The primary structure comprises 537 residues: CTP synthase (537 aa).

Residues Met-1–Leu-267 are amidoligase domain. Ser-13 contributes to the CTP binding site. Ser-13 is a UTP binding site. Ser-14 to Ile-19 lines the ATP pocket. Position 54 (Tyr-54) interacts with L-glutamine. Asp-71 is a binding site for ATP. Mg(2+) contacts are provided by Asp-71 and Glu-141. CTP-binding positions include Asp-148 to Glu-150, Lys-188 to Gln-193, and Lys-224. Residues Lys-188–Gln-193 and Lys-224 each bind UTP. Arg-240–Val-242 is a binding site for ATP. The 244-residue stretch at Arg-292–Gln-535 folds into the Glutamine amidotransferase type-1 domain. Position 354 (Gly-354) interacts with L-glutamine. Catalysis depends on Cys-381, which acts as the Nucleophile; for glutamine hydrolysis. L-glutamine contacts are provided by residues Leu-382 to Gln-385, Glu-405, and Arg-463. Active-site residues include His-508 and Glu-510.

Belongs to the CTP synthase family. As to quaternary structure, homotetramer.

The enzyme catalyses UTP + L-glutamine + ATP + H2O = CTP + L-glutamate + ADP + phosphate + 2 H(+). It carries out the reaction L-glutamine + H2O = L-glutamate + NH4(+). It catalyses the reaction UTP + NH4(+) + ATP = CTP + ADP + phosphate + 2 H(+). The protein operates within pyrimidine metabolism; CTP biosynthesis via de novo pathway; CTP from UDP: step 2/2. Its activity is regulated as follows. Allosterically activated by GTP, when glutamine is the substrate; GTP has no effect on the reaction when ammonia is the substrate. The allosteric effector GTP functions by stabilizing the protein conformation that binds the tetrahedral intermediate(s) formed during glutamine hydrolysis. Inhibited by the product CTP, via allosteric rather than competitive inhibition. Catalyzes the ATP-dependent amination of UTP to CTP with either L-glutamine or ammonia as the source of nitrogen. Regulates intracellular CTP levels through interactions with the four ribonucleotide triphosphates. This chain is CTP synthase, found in Streptococcus equi subsp. equi (strain 4047).